The following is a 126-amino-acid chain: Ribonuclease P protein component (126 aa).

The protein belongs to the RnpA family. Consists of a catalytic RNA component (M1 or rnpB) and a protein subunit.

The catalysed reaction is Endonucleolytic cleavage of RNA, removing 5'-extranucleotides from tRNA precursor.. Its function is as follows. RNaseP catalyzes the removal of the 5'-leader sequence from pre-tRNA to produce the mature 5'-terminus. It can also cleave other RNA substrates such as 4.5S RNA. The protein component plays an auxiliary but essential role in vivo by binding to the 5'-leader sequence and broadening the substrate specificity of the ribozyme. The sequence is that of Ribonuclease P protein component from Rhodococcus erythropolis (strain PR4 / NBRC 100887).